Here is a 265-residue protein sequence, read N- to C-terminus: MEFLKRSFAPLTEKQWQEIDNRAREIFKTQLYGRKFVDVEGPYGWEYAAHPLGEVEVLSDENEVVKWGLRKSLPLIELRATFTLDLWELDNLERGKPNVDLSSLEETVRKVAEFEDEVIFRGCEKSGVKGLLSFEERKIECGSTPKDLLEAIVRALSIFSKDGIEGPYTLVINTDRWVSFLKEEAGHYPLEKRVEECLRGGKIITTPRIEDALVVSERGGDFKLILGQDLSIGYEDREKDAVRLFITETFTFQVVNPEALILLKF.

FMN is bound by residues 79-81 (RAT) and W87. Residues 184–189 (EAGHYP) form a pore-forming loop region. Residue E235 coordinates FMN.

This sequence belongs to the encapsulin family. Family 1 subfamily. In terms of assembly, this encapsulin nanocompartment is formed by 60 subunits; monomers form pentamers which assemble to form shells. There are 12 pores where the pentamers meet as well as 3-fold axis channels and dimer channels; none are larger than 3-4 Angstroms in diameter. The N-terminus of the protein is inside the shell, the C-terminus is outside. It depends on FMN as a cofactor.

It is found in the encapsulin nanocompartment. Its function is as follows. Shell component of a type 1 encapsulin nanocompartment. Assembles into proteinaceous shells 23-24 nm in diameter with 2-2.5 nm thick walls. Cargo protein Flp (ferritin-like protein, may store iron) is targeted to the interior via its C-terminal extension. The sequence is that of Type 1 encapsulin shell protein from Thermotoga petrophila (strain ATCC BAA-488 / DSM 13995 / JCM 10881 / RKU-1).